The chain runs to 359 residues: Dual-specificity RNA methyltransferase RlmN (359 aa).

Glutamate 102 acts as the Proton acceptor in catalysis. The Radical SAM core domain occupies 108–351; it reads EKKRATLCIS…IRKNRGSDIQ (244 aa). Residues cysteine 115 and cysteine 354 are joined by a disulfide bond. [4Fe-4S] cluster-binding residues include cysteine 122, cysteine 126, and cysteine 129. Residues 178–179, serine 210, 232–234, and asparagine 311 contribute to the S-adenosyl-L-methionine site; these read GE and SLH. Cysteine 354 acts as the S-methylcysteine intermediate in catalysis.

Belongs to the radical SAM superfamily. RlmN family. [4Fe-4S] cluster serves as cofactor.

The protein localises to the cytoplasm. It catalyses the reaction adenosine(2503) in 23S rRNA + 2 reduced [2Fe-2S]-[ferredoxin] + 2 S-adenosyl-L-methionine = 2-methyladenosine(2503) in 23S rRNA + 5'-deoxyadenosine + L-methionine + 2 oxidized [2Fe-2S]-[ferredoxin] + S-adenosyl-L-homocysteine. It carries out the reaction adenosine(37) in tRNA + 2 reduced [2Fe-2S]-[ferredoxin] + 2 S-adenosyl-L-methionine = 2-methyladenosine(37) in tRNA + 5'-deoxyadenosine + L-methionine + 2 oxidized [2Fe-2S]-[ferredoxin] + S-adenosyl-L-homocysteine. In terms of biological role, specifically methylates position 2 of adenine 2503 in 23S rRNA and position 2 of adenine 37 in tRNAs. m2A2503 modification seems to play a crucial role in the proofreading step occurring at the peptidyl transferase center and thus would serve to optimize ribosomal fidelity. This chain is Dual-specificity RNA methyltransferase RlmN, found in Buchnera aphidicola subsp. Cinara cedri (strain Cc).